A 95-amino-acid chain; its full sequence is uncharacterized protein (95 aa).

2 repeat units span residues 67 to 74 and 85 to 92. A 2 X 8 AA approximate repeats region spans residues 67 to 92; sequence GCGCGCGCATVAAVSPVPCGGCCGCG.

This is an uncharacterized protein from Caenorhabditis elegans.